Reading from the N-terminus, the 190-residue chain is Recombination protein RecR (190 aa).

The C4-type zinc finger occupies 58 to 73 (CEQCGALSENELCEIC). The Toprim domain maps to 81–167 (NILCIVESPK…TFSKIAQGIP (87 aa)).

Belongs to the RecR family.

In terms of biological role, may play a role in DNA repair. It seems to be involved in an RecBC-independent recombinational process of DNA repair. It may act with RecF and RecO. The sequence is that of Recombination protein RecR from Campylobacter jejuni (strain RM1221).